The primary structure comprises 283 residues: Acetylglutamate kinase (283 aa).

Substrate contacts are provided by residues 64–65 (GG), arginine 86, and asparagine 181.

Belongs to the acetylglutamate kinase family. ArgB subfamily.

Its subcellular location is the cytoplasm. It carries out the reaction N-acetyl-L-glutamate + ATP = N-acetyl-L-glutamyl 5-phosphate + ADP. The protein operates within amino-acid biosynthesis; L-arginine biosynthesis; N(2)-acetyl-L-ornithine from L-glutamate: step 2/4. In terms of biological role, catalyzes the ATP-dependent phosphorylation of N-acetyl-L-glutamate. This Sulfurovum sp. (strain NBC37-1) protein is Acetylglutamate kinase.